Consider the following 375-residue polypeptide: Probable serine/threonine-protein kinase PBL28 (375 aa).

Thr-65 is modified (phosphothreonine). Residues 76–356 form the Protein kinase domain; sequence FSDENLLGKG…MDCVKELQLI (281 aa). ATP-binding positions include 82 to 90 and Lys-104; that span reads LGKGGFGRV. Tyr-152 is subject to Phosphotyrosine. Asp-205 serves as the catalytic Proton acceptor. Thr-245 is modified (phosphothreonine). Tyr-253 is modified (phosphotyrosine).

The protein belongs to the protein kinase superfamily. Ser/Thr protein kinase family.

It localises to the cell membrane. It carries out the reaction L-seryl-[protein] + ATP = O-phospho-L-seryl-[protein] + ADP + H(+). It catalyses the reaction L-threonyl-[protein] + ATP = O-phospho-L-threonyl-[protein] + ADP + H(+). Its function is as follows. May be involved in plant defense signaling. This Arabidopsis thaliana (Mouse-ear cress) protein is Probable serine/threonine-protein kinase PBL28.